The following is a 207-amino-acid chain: Large ribosomal subunit protein uL4 (207 aa).

The segment at 49–73 is disordered; that stretch reads AKKRGEVSGGGKKPWKQKGGGRARA.

It belongs to the universal ribosomal protein uL4 family. As to quaternary structure, part of the 50S ribosomal subunit.

Its function is as follows. One of the primary rRNA binding proteins, this protein initially binds near the 5'-end of the 23S rRNA. It is important during the early stages of 50S assembly. It makes multiple contacts with different domains of the 23S rRNA in the assembled 50S subunit and ribosome. Functionally, forms part of the polypeptide exit tunnel. This chain is Large ribosomal subunit protein uL4, found in Helicobacter hepaticus (strain ATCC 51449 / 3B1).